Consider the following 96-residue polypeptide: MSAAPLVRAVRWYQRVLSPRKPAPTCRFSPTCSEYAAQALDRHGALKGGWLALWRVLRCNPLVPGGFDPVPEHFPARHPRPQGSPPTDHPPTDQPS.

The disordered stretch occupies residues aspartate 68–serine 96. A compositionally biased stretch (pro residues) spans glutamine 82 to serine 96.

The protein belongs to the UPF0161 family.

It localises to the cell membrane. In terms of biological role, could be involved in insertion of integral membrane proteins into the membrane. This chain is Putative membrane protein insertion efficiency factor, found in Deinococcus radiodurans (strain ATCC 13939 / DSM 20539 / JCM 16871 / CCUG 27074 / LMG 4051 / NBRC 15346 / NCIMB 9279 / VKM B-1422 / R1).